We begin with the raw amino-acid sequence, 3946 residues long: Hybrid PKS-NRPS synthetase lepA (3946 aa).

A Ketosynthase family 3 (KS3) domain is found at 9–440 (VEPIAIVGSA…GTNAHVILEG (432 aa)). Residues Cys183, His320, and His363 each act as for beta-ketoacyl synthase activity in the active site. The interval 553-871 (IFTGQGAQWA…PYAGIMRRAT (319 aa)) is malonyl-CoA:ACP transacylase (MAT) domain. The interval 945–1073 (HELLGRRAPD…GRLILFKGEG (129 aa)) is N-terminal hotdog fold. The interval 945–1238 (HELLGRRAPD…RLQSFTEAKA (294 aa)) is dehydratase (DH) domain. The region spanning 945–1239 (HELLGRRAPD…LQSFTEAKAL (295 aa)) is the PKS/mFAS DH domain. His977 acts as the Proton acceptor; for dehydratase activity in catalysis. Residues 1088-1239 (LSPLDREMFY…LQSFTEAKAL (152 aa)) are C-terminal hotdog fold. The Proton donor; for dehydratase activity role is filled by Asp1147. The methyltransferase (MT) domain stretch occupies residues 1380–1580 (LLNRFYTDGR…ATVSDLPSDG (201 aa)). The interval 2093 to 2266 (TYWMIGLNSE…AASVIDIGLV (174 aa)) is ketoreductase (KR) domain. Over residues 2352–2365 (SSQDSDQSNSTSAS) the composition is skewed to low complexity. The tract at residues 2352–2372 (SSQDSDQSNSTSASIRDQVSS) is disordered. The Carrier 1 domain occupies 2378-2455 (EGTDVLLRCF…EICAEAIQKF (78 aa)). Position 2415 is an O-(pantetheine 4'-phosphoryl)serine (Ser2415). The segment at 2474 to 2531 (KQATASPPEIGREEAQSTSRAGILPTDQDNDNSSDSESQRKSGASSSSGSGTRTPTSI) is disordered. Residues 2508 to 2530 (DSESQRKSGASSSSGSGTRTPTS) show a composition bias toward low complexity. The interval 2547–2976 (PMSYAQSRLW…MQIQDGLLND (430 aa)) is condensation (C) domain. Positions 3000–3402 (FSQRAATDAN…GGLIFMGRLD (403 aa)) are adenylation (A) (KR) domain. Positions 3492 to 3511 (GKVDRKALQDKPLPTEPDSS) are disordered. The Carrier 2 domain maps to 3515 to 3594 (EALSLAEGEL…RMATLIDAEK (80 aa)). Ser3554 bears the O-(pantetheine 4'-phosphoryl)serine mark. A reductase (RED) domain region spans residues 3633–3833 (LTGSTGFLGM…RFSVLMKVVP (201 aa)).

The protein in the C-terminal section; belongs to the NRP synthetase family.

In terms of biological role, hybrid PKS-NRPS synthetase; part of the gene cluster 23 that mediates the biosynthesis of a family of 2-pyridones known as leporins. The hybrid PKS-NRPS synthetase lepA and the enoyl reductase lepG are responsible for fusion of phenylalanine with a hexaketide and subsequent release of the stable tetramic acid precursor, pre-leporin C. Because lepA lacks a designated enoylreductase (ER) domain, the required activity is provided the enoyl reductase lepG. It is possible that the dehydrogenase lepF also participates in production of pre-leporin C. Cytochrome P450 monooxygenase lepH is then required for the ring expansion step to yield leporin C. Leporin C is then presumably further oxidized by the N-hydroxylase lepD to form leporin B. LepI may possess a function in biosynthesis upstream of lepA. Leporin B is further oxidized in the presence of ferric ion to give the leporin B trimer-iron chelate, but whether or not this reaction is catalyzed by an enzyme in the pathway or by ferric ion is not determined yet. The sequence is that of Hybrid PKS-NRPS synthetase lepA from Aspergillus flavus (strain ATCC 200026 / FGSC A1120 / IAM 13836 / NRRL 3357 / JCM 12722 / SRRC 167).